The primary structure comprises 463 residues: tRNA modification GTPase MnmE (463 aa).

3 residues coordinate (6S)-5-formyl-5,6,7,8-tetrahydrofolate: Arg26, Glu88, and Arg127. The 160-residue stretch at 224–383 (GLATAIIGRP…LEQRIAKMFF (160 aa)) folds into the TrmE-type G domain. Asn234 contacts K(+). GTP contacts are provided by residues 234-239 (NVGKSS), 253-259 (TDVAGTT), and 278-281 (DTAG). Ser238 contacts Mg(2+). The K(+) site is built by Thr253, Val255, and Thr258. Residue Thr259 participates in Mg(2+) binding. (6S)-5-formyl-5,6,7,8-tetrahydrofolate is bound at residue Lys463.

Belongs to the TRAFAC class TrmE-Era-EngA-EngB-Septin-like GTPase superfamily. TrmE GTPase family. Homodimer. Heterotetramer of two MnmE and two MnmG subunits. K(+) is required as a cofactor.

The protein resides in the cytoplasm. Exhibits a very high intrinsic GTPase hydrolysis rate. Involved in the addition of a carboxymethylaminomethyl (cmnm) group at the wobble position (U34) of certain tRNAs, forming tRNA-cmnm(5)s(2)U34. The polypeptide is tRNA modification GTPase MnmE (Lactiplantibacillus plantarum (strain ATCC BAA-793 / NCIMB 8826 / WCFS1) (Lactobacillus plantarum)).